Here is a 524-residue protein sequence, read N- to C-terminus: G1/S-specific cyclin-E (524 aa).

The interval 1–155 is disordered; the sequence is MAGRKSSRTA…EESHEMVRLE (155 aa). Residues 18 to 47 are compositionally biased toward basic and acidic residues; that stretch reads KPERKSAILSPHDELRERLLETAIDMKENI. Over residues 48 to 62 the composition is skewed to polar residues; sequence PQRNTRNSSVGSQKS. Basic and acidic residues-rich tracts occupy residues 63–78, 86–95, and 146–155; these read DCSETRKRRSTKEGPA, KHRNGSREDS, and EESHEMVRLE.

Belongs to the cyclin family. Cyclin E subfamily. As to quaternary structure, interacts with a member of the CDK2/CDK protein kinases to form a serine/threonine kinase holoenzyme complex. The cyclin subunit imparts substrate specificity to the complex. As to expression, expressed dynamically in proliferating cells throughout development. Detectable in larval blast cells undergoing active proliferation that give rise to all tissue types, including germline, intestine, hypodermis, neurons, and muscle.

Its subcellular location is the nucleus. The protein resides in the cytoplasm. It localises to the cytoskeleton. It is found in the microtubule organizing center. The protein localises to the centrosome. Its subcellular location is the centriole. Functionally, essential for the control of the cell cycle at the G1/S (start) transition. In association with cdk-2, regulates proliferation, quiescent state and cell fate during the development of several cell lineages. In the embryo, initiates the establishment of cell polarity through the recruitment of the centrosomal proteins spd-2 and spd-5 during prophase. During the development of the vulva, controls the onset of vulval cell terminal differentiation by controlling the duration of G1 phase. During hypoderm development at early larval stages, controls syncytial fate of seam cell daughter cells. Involved in the progression of cell division in the intestinal lineage in larvae, and in particular in endoreplication, a specific growth pathway in the intestinal epithelium, required for feeding and gut development in growing larvae. By controlling the activity of translational repressor gld-1, regulates the pool of germline stem cells and the size of the mitotic zone by preventing entry into meiosis. In addition, repression of expression by gld-1 prevents mitosis re-entry in meiotic germline cells. This Caenorhabditis elegans protein is G1/S-specific cyclin-E.